Reading from the N-terminus, the 450-residue chain is uncharacterized protein (450 aa).

Lys283 carries the N6-(pyridoxal phosphate)lysine modification.

Belongs to the class-III pyridoxal-phosphate-dependent aminotransferase family. Pyridoxal 5'-phosphate serves as cofactor.

In terms of biological role, essential for glycerol catabolism. This is an uncharacterized protein from Bacillus subtilis (strain 168).